We begin with the raw amino-acid sequence, 253 residues long: FGFR1 oncogene partner 2 homolog (253 aa).

The stretch at 5–104 forms a coiled coil; the sequence is IEKALADAKA…SALELIMSKY (100 aa). Ser-140 is subject to Phosphoserine. The stretch at 160–223 forms a coiled coil; that stretch reads LERRHLEANQ…LREILQITRE (64 aa). A disordered region spans residues 231–253; that stretch reads DDASESTSLSALVTNSDLSLRKS. The span at 235–253 shows a compositional bias: polar residues; it reads ESTSLSALVTNSDLSLRKS.

Belongs to the SIKE family.

The protein localises to the cytoplasm. May be involved in wound healing pathway. The chain is FGFR1 oncogene partner 2 homolog (Fgfr1op2) from Mus musculus (Mouse).